The chain runs to 388 residues: Protein TsgA homolog (388 aa).

12 helical membrane passes run 11-31 (WISF…GMIM), 50-70 (TFLN…IEII), 77-97 (IFSF…NSIF), 101-121 (INMF…TFII), 133-153 (LLLL…IVTA), 160-180 (IIWY…FLLT), 206-226 (VFLL…FISW), 244-264 (SLVS…SFII), 268-288 (NLYR…YCFI), 298-318 (YIII…ITLA), 332-352 (LILL…SPIV), and 360-380 (TLIS…LIYF).

This sequence belongs to the major facilitator superfamily. TsgA family.

The protein resides in the cell membrane. In Buchnera aphidicola subsp. Acyrthosiphon pisum (strain Tuc7), this protein is Protein TsgA homolog.